A 225-amino-acid chain; its full sequence is Octanoyltransferase (225 aa).

A BPL/LPL catalytic domain is found at 37–217; the sequence is SDTPDEFWVV…ELASLIGYQT (181 aa). Substrate contacts are provided by residues 76 to 83, 148 to 150, and 161 to 163; these read RGGQVTYH, SLG, and GLA. Residue Cys179 is the Acyl-thioester intermediate of the active site.

The protein belongs to the LipB family.

Its subcellular location is the cytoplasm. The enzyme catalyses octanoyl-[ACP] + L-lysyl-[protein] = N(6)-octanoyl-L-lysyl-[protein] + holo-[ACP] + H(+). Its pathway is protein modification; protein lipoylation via endogenous pathway; protein N(6)-(lipoyl)lysine from octanoyl-[acyl-carrier-protein]: step 1/2. In terms of biological role, catalyzes the transfer of endogenously produced octanoic acid from octanoyl-acyl-carrier-protein onto the lipoyl domains of lipoate-dependent enzymes. Lipoyl-ACP can also act as a substrate although octanoyl-ACP is likely to be the physiological substrate. The sequence is that of Octanoyltransferase from Aeromonas salmonicida (strain A449).